The chain runs to 666 residues: Protein-arginine deiminase type-4 (666 aa).

Ca(2+) contacts are provided by N153, D155, D165, D168, D176, and D179. Citrulline is present on residues R212 and R218. Q349 serves as a coordination point for Ca(2+). D350 is an active-site residue. Residues E351, E353, D369, and S370 each coordinate Ca(2+). R372, R374, and R383 each carry citrulline. R374 is a binding site for substrate. 3 residues coordinate Ca(2+): F407, L410, and E411. Residues H471, D473, and C648 contribute to the active site.

This sequence belongs to the protein arginine deiminase family. Ca(2+) serves as cofactor. Autocitrullination at Arg-372 and Arg-374 inactivates the enzyme. As to expression, expressed in pluripotent embryonic stem and induced pluripotent stem cells but not multipotent neural stem cells.

The protein localises to the cytoplasm. Its subcellular location is the nucleus. It localises to the cytoplasmic granule. It catalyses the reaction L-arginyl-[protein] + H2O = L-citrullyl-[protein] + NH4(+). Strongly Inhibited by F-amidine and N-alpha-benzoyl-N5-(2-chloro-1-iminoethyl)-L-ornithine amide (Cl-amidine). These inhibitors are however not specific to PADI4 and also inhibit other members of the family. Functionally, catalyzes the citrullination/deimination of arginine residues of proteins such as histones, thereby playing a key role in histone code and regulation of stem cell maintenance. Citrullinates histone H1 at 'Arg-54' (to form H1R54ci), histone H3 at 'Arg-2', 'Arg-8', 'Arg-17' and/or 'Arg-26' (to form H3R2ci, H3R8ci, H3R17ci, H3R26ci, respectively) and histone H4 at 'Arg-3' (to form H4R3ci). Acts as a key regulator of stem cell maintenance by mediating citrullination of histone H1: citrullination of 'Arg-54' of histone H1 (H1R54ci) results in H1 displacement from chromatin and global chromatin decondensation, thereby promoting pluripotency and stem cell maintenance. Promotes profound chromatin decondensation during the innate immune response to infection in neutrophils by mediating formation of H1R54ci. Required for the formation of neutrophil extracellular traps (NETs); NETs are mainly composed of DNA fibers and are released by neutrophils to bind pathogens during inflammation. Citrullination of histone H3 prevents their methylation by CARM1 and HRMT1L2/PRMT1 and represses transcription. Citrullinates EP300/P300 at 'Arg-2142', which favors its interaction with NCOA2/GRIP1. The polypeptide is Protein-arginine deiminase type-4 (Padi4) (Mus musculus (Mouse)).